The sequence spans 357 residues: MSQEAARDAAAGRPVQIHDPTLRDGQHAVRHSLGAEQFRAYLKAADAAAVPVVEVGHGNGLAASSLQVGRARLSDDEMMSIARETLTTSKLGVLMFPGWATTQDIKNALAYEVDLVRIATHCTEASVAERHLGFLRDEGVEAHGMVVMTHMASPDQLAEECARLVGYGATGVGILDSSGHFLPSDVTARIGAICAAVDVPVMFHGHNNLGMAVANSIAAAQAGAGILDACARGFGAGAGNTQLEVLVPVLERLGFRTGIDLYRLLDAADIAGRELMPAPPTIDSVSIVSGLAGVFSGFKKPVLDIAAREGVDPRDIFFELGRRQVVAGQEDLIVEVALALRAARDGASPASSGTGPC.

The interval 1–21 (MSQEAARDAAAGRPVQIHDPT) is disordered. A Pyruvate carboxyltransferase domain is found at 15–265 (VQIHDPTLRD…RTGIDLYRLL (251 aa)). Substrate is bound at residue 23 to 24 (RD). Asp-24 contacts Mn(2+). His-27 functions as the Proton acceptor in the catalytic mechanism. 2 residues coordinate substrate: Ser-177 and His-204. Residues His-204 and His-206 each coordinate Mn(2+).

It belongs to the 4-hydroxy-2-oxovalerate aldolase family.

It carries out the reaction (S)-4-hydroxy-2-oxopentanoate = acetaldehyde + pyruvate. In terms of biological role, involved in the biosynthesis of the peptidyl nucleoside antibiotic nikkomycin. The protein is 4-hydroxy-2-oxovalerate aldolase of Streptomyces tendae.